Here is a 767-residue protein sequence, read N- to C-terminus: Bifunctional lysine-specific demethylase and histidyl-hydroxylase NO66 (767 aa).

The segment at 21 to 324 (TVSQKQQREK…GRQEAHRQNS (304 aa)) is disordered. Ser44 bears the Phosphoserine mark. Residues 46–71 (SDDDDEDDGEGEDDNDSNSDEDESGS) show a composition bias toward acidic residues. A compositionally biased stretch (low complexity) spans 72–81 (ESDATSADDS). The span at 82–98 (FSSDDNDDDDSGDEDGS) shows a compositional bias: acidic residues. 2 stretches are compositionally biased toward polar residues: residues 127-137 (YTINSENSSVE) and 177-199 (ESAT…TSKP). Phosphoserine is present on Ser214. A compositionally biased stretch (polar residues) spans 262–279 (PSSSGASCPLPSKTSKQV). A compositionally biased stretch (basic and acidic residues) spans 315–324 (GRQEAHRQNS). Residues 420–565 (CSIRILNPST…NLLEKLMPMV (146 aa)) form the JmjC domain. 3 residues coordinate Fe cation: His466, Asp468, and His531.

It belongs to the ROX family. NO66 subfamily. The cofactor is Fe(2+).

It localises to the nucleus. It catalyses the reaction N(6),N(6)-dimethyl-L-lysyl(36)-[histone H3] + 2 2-oxoglutarate + 2 O2 = L-lysyl(36)-[histone H3] + 2 formaldehyde + 2 succinate + 2 CO2. Functionally, oxygenase that can act as both a histone lysine demethylase and a ribosomal histidine hydroxylase. Specifically demethylates 'Lys-4' (H3K4me) and 'Lys-36' (H3K36me) of histone H3, thereby playing a central role in histone code. The sequence is that of Bifunctional lysine-specific demethylase and histidyl-hydroxylase NO66 from Drosophila willistoni (Fruit fly).